Here is a 212-residue protein sequence, read N- to C-terminus: MKGKFIVIEGIDGCGKTTQINELSKWLPKSGLIKKGSKLITTREPGGSLLGKKLRGLILDNNKTNKPSSLAELLLYSADRAEHISKIISPALNNNDWVISDRFSDSTLAYQGYGRKINLEIIKKVESIVCQGEYPDLTFFLEISPEESIMRRKNEIPDRIESEGIRFLEKVNEGFKLIAREKKWKVISASQNIKTISNQIKETLLNNFSNDK.

Residue 10-17 participates in ATP binding; that stretch reads GIDGCGKT.

Belongs to the thymidylate kinase family.

The enzyme catalyses dTMP + ATP = dTDP + ADP. In terms of biological role, phosphorylation of dTMP to form dTDP in both de novo and salvage pathways of dTTP synthesis. This chain is Thymidylate kinase, found in Prochlorococcus marinus (strain MIT 9312).